Consider the following 288-residue polypeptide: 2-dehydro-3-deoxyphosphooctonate aldolase (288 aa).

This sequence belongs to the KdsA family.

The protein resides in the cytoplasm. It catalyses the reaction D-arabinose 5-phosphate + phosphoenolpyruvate + H2O = 3-deoxy-alpha-D-manno-2-octulosonate-8-phosphate + phosphate. The protein operates within carbohydrate biosynthesis; 3-deoxy-D-manno-octulosonate biosynthesis; 3-deoxy-D-manno-octulosonate from D-ribulose 5-phosphate: step 2/3. Its pathway is bacterial outer membrane biogenesis; lipopolysaccharide biosynthesis. This chain is 2-dehydro-3-deoxyphosphooctonate aldolase, found in Syntrophobacter fumaroxidans (strain DSM 10017 / MPOB).